The primary structure comprises 551 residues: Formate--tetrahydrofolate ligase (551 aa).

ATP is bound at residue 61 to 68; the sequence is TPAGEGKS.

The protein belongs to the formate--tetrahydrofolate ligase family.

It carries out the reaction (6S)-5,6,7,8-tetrahydrofolate + formate + ATP = (6R)-10-formyltetrahydrofolate + ADP + phosphate. It participates in one-carbon metabolism; tetrahydrofolate interconversion. The sequence is that of Formate--tetrahydrofolate ligase from Lactiplantibacillus plantarum (strain ATCC BAA-793 / NCIMB 8826 / WCFS1) (Lactobacillus plantarum).